Here is a 760-residue protein sequence, read N- to C-terminus: uncharacterized protein (760 aa).

An N-terminal signal peptide occupies residues 1–23 (MVIKKGFFALSSCTLGLGLILTA). Cysteine 24 is lipidated: N-palmitoyl cysteine. Residue cysteine 24 is the site of S-diacylglycerol cysteine attachment. Disordered regions lie at residues 220 to 262 (ANGK…NSDN) and 443 to 482 (YEIK…NQTS). 2 stretches are compositionally biased toward polar residues: residues 222 to 257 (GKTT…SQDA) and 448 to 472 (PTNS…GKEQ).

This sequence belongs to the MG185/MG260 family.

The protein resides in the cell membrane. This is an uncharacterized protein from Mycoplasma pneumoniae (strain ATCC 29342 / M129 / Subtype 1) (Mycoplasmoides pneumoniae).